Consider the following 451-residue polypeptide: Jacalin-related lectin 35 (451 aa).

A2 bears the N-acetylalanine mark. 3 Jacalin-type lectin domains span residues 2–143, 156–297, and 306–448; these read AKKL…YIIP, LTKL…YIIP, and SNTI…NVAP.

Belongs to the jacalin lectin family. As to quaternary structure, component of the PYK10 complex, at least composed of PYK10/BGLU23, BGLU21, BGLU22, JAL22, JAL23, PBP1/JAL30, PBP2/JAL31, JAL32, JAL33, JAL34, JAL35, GLL22 and GLL23.

This chain is Jacalin-related lectin 35 (JAL35), found in Arabidopsis thaliana (Mouse-ear cress).